A 236-amino-acid polypeptide reads, in one-letter code: Flagellar L-ring protein (236 aa).

The signal sequence occupies residues 1 to 16 (MRMRITAILAAGLLAG). Cys17 carries N-palmitoyl cysteine lipidation. Cys17 is lipidated: S-diacylglycerol cysteine. Residues 96–143 (ENETDRSRKNSSGFNLGASGESQTSDFAWSGDLEYGSNTKTEGDGKTE) are disordered. Residues 105 to 122 (NSSGFNLGASGESQTSDF) are compositionally biased toward polar residues.

The protein belongs to the FlgH family. As to quaternary structure, the basal body constitutes a major portion of the flagellar organelle and consists of four rings (L,P,S, and M) mounted on a central rod.

Its subcellular location is the cell outer membrane. It is found in the bacterial flagellum basal body. Functionally, assembles around the rod to form the L-ring and probably protects the motor/basal body from shearing forces during rotation. The protein is Flagellar L-ring protein of Sinorhizobium medicae (strain WSM419) (Ensifer medicae).